The sequence spans 115 residues: Large ribosomal subunit protein P2x (115 aa).

The tract at residues 78–115 (GGGGGAASAAEPVAESKKKVEEVKDESSDDAGMMGLFD) is disordered. Positions 91–103 (AESKKKVEEVKDE) are enriched in basic and acidic residues. Phosphoserine occurs at positions 104 and 105.

Belongs to the eukaryotic ribosomal protein P1/P2 family. As to quaternary structure, P1 and P2 exist as dimers at the large ribosomal subunit.

Its function is as follows. Plays an important role in the elongation step of protein synthesis. The protein is Large ribosomal subunit protein P2x (RPP2C) of Arabidopsis thaliana (Mouse-ear cress).